The following is a 301-amino-acid chain: Ribonuclease Z (301 aa).

Residues H60, H62, D64, H65, H137, D207, and H265 each contribute to the Zn(2+) site. Catalysis depends on D64, which acts as the Proton acceptor.

The protein belongs to the RNase Z family. Homodimer. It depends on Zn(2+) as a cofactor.

The catalysed reaction is Endonucleolytic cleavage of RNA, removing extra 3' nucleotides from tRNA precursor, generating 3' termini of tRNAs. A 3'-hydroxy group is left at the tRNA terminus and a 5'-phosphoryl group is left at the trailer molecule.. In terms of biological role, zinc phosphodiesterase, which displays some tRNA 3'-processing endonuclease activity. Probably involved in tRNA maturation, by removing a 3'-trailer from precursor tRNA. The polypeptide is Ribonuclease Z (Exiguobacterium sp. (strain ATCC BAA-1283 / AT1b)).